The sequence spans 884 residues: Valine--tRNA ligase (884 aa).

Positions 43–53 (PNVTGSLHIGH) match the 'HIGH' region motif. The 'KMSKS' region signature appears at 530–534 (KMSKS). Lysine 533 contributes to the ATP binding site. The stretch at 817–884 (VIDLDAERGR…KLKAALERLM (68 aa)) forms a coiled coil.

The protein belongs to the class-I aminoacyl-tRNA synthetase family. ValS type 1 subfamily. In terms of assembly, monomer.

The protein localises to the cytoplasm. The catalysed reaction is tRNA(Val) + L-valine + ATP = L-valyl-tRNA(Val) + AMP + diphosphate. In terms of biological role, catalyzes the attachment of valine to tRNA(Val). As ValRS can inadvertently accommodate and process structurally similar amino acids such as threonine, to avoid such errors, it has a 'posttransfer' editing activity that hydrolyzes mischarged Thr-tRNA(Val) in a tRNA-dependent manner. This is Valine--tRNA ligase from Zymomonas mobilis subsp. mobilis (strain ATCC 31821 / ZM4 / CP4).